A 482-amino-acid polypeptide reads, in one-letter code: Proline--tRNA ligase (482 aa).

This sequence belongs to the class-II aminoacyl-tRNA synthetase family. ProS type 3 subfamily. As to quaternary structure, homodimer.

The protein localises to the cytoplasm. The enzyme catalyses tRNA(Pro) + L-proline + ATP = L-prolyl-tRNA(Pro) + AMP + diphosphate. Catalyzes the attachment of proline to tRNA(Pro) in a two-step reaction: proline is first activated by ATP to form Pro-AMP and then transferred to the acceptor end of tRNA(Pro). The sequence is that of Proline--tRNA ligase from Mycoplasmopsis synoviae (strain 53) (Mycoplasma synoviae).